Reading from the N-terminus, the 901-residue chain is Bifunctional protein STORR (901 aa).

The chain crosses the membrane as a helical span at residues 12-32 (TSSVVALLLALVSILSSVVVL). Residue Cys-513 participates in heme binding.

It in the N-terminal section; belongs to the cytochrome P450 family. In the C-terminal section; belongs to the aldo/keto reductase family. Requires heme as cofactor.

It localises to the membrane. The enzyme catalyses (R)-reticuline + NADP(+) = 1,2-dehydroreticuline + NADPH + H(+). It catalyses the reaction (S)-reticuline + reduced [NADPH--hemoprotein reductase] + O2 = 1,2-dehydroreticuline + oxidized [NADPH--hemoprotein reductase] + 2 H2O + H(+). It participates in alkaloid biosynthesis; morphine biosynthesis. Its function is as follows. Bifunctional protein involved in the biosynthesis of morphinan-type benzylisoquinoline alkaloids. Required for the isomerization of (S)- to (R)-reticuline. The cytochrome P450 module is responsible for the conversion of (S)-reticuline to 1,2-dehydroreticuline while the oxidoreductase module converts 1,2-dehydroreticuline to (R)-reticuline. The polypeptide is Bifunctional protein STORR (Papaver somniferum (Opium poppy)).